Here is an 85-residue protein sequence, read N- to C-terminus: Protein WIR1B (85 aa).

Residues 1 to 12 are Cytoplasmic-facing; that stretch reads MASHSAAGRRPT. Residues 13–34 traverse the membrane as a helical segment; that stretch reads ALVHIALFVAIAAVIINSSVCL. Residues 35–85 are Extracellular-facing; the sequence is GAAVHDAATSGTGALDPNVPAVPTPGGAGQPYTGRGCRTVYGCKPPAGSQP.

It localises to the membrane. Functionally, associated with pathogen defense. The polypeptide is Protein WIR1B (WIR1B) (Triticum aestivum (Wheat)).